We begin with the raw amino-acid sequence, 45 residues long: MTKRTFGGTSRKRKRVSGFRVRMRSHTGRRVIRTRRKRGRSRLAA.

The interval 1-45 (MTKRTFGGTSRKRKRVSGFRVRMRSHTGRRVIRTRRKRGRSRLAA) is disordered. Over residues 10 to 45 (SRKRKRVSGFRVRMRSHTGRRVIRTRRKRGRSRLAA) the composition is skewed to basic residues.

Belongs to the bacterial ribosomal protein bL34 family.

In Synechococcus sp. (strain CC9311), this protein is Large ribosomal subunit protein bL34.